Consider the following 344-residue polypeptide: Melanocyte-stimulating hormone receptor (344 aa).

Over 1-37 (MPMQGAQRKLLGSLNSTPTATSNPGLAANHTGAPCLE) the chain is Extracellular. Asn29 carries an N-linked (GlcNAc...) asparagine glycan. Residues 38–63 (VSIPDGLFLSLGLVSLVENVLVVAAI) traverse the membrane as a helical segment. The Cytoplasmic portion of the chain corresponds to 64–72 (AKNRNLHSS). A helical membrane pass occupies residues 73–93 (MYYFICCLALSDLLVSGSNML). At 94 to 118 (ETAIILLLEAGTLATRASVVQQLHN) the chain is on the extracellular side. A helical transmembrane segment spans residues 119–140 (TIDVLTCSSMLCSLCFLGAIAV). Over 141–163 (DRYISIFYALRYHSIMTLPRAQR) the chain is Cytoplasmic. The helical transmembrane segment at 164–183 (AIAAIWVASVLSSTLFITYY) threads the bilayer. Residues 184 to 191 (DHAAVLLC) lie on the Extracellular side of the membrane. The chain crosses the membrane as a helical span at residues 192-211 (LVVFFLAMLVLMAVLYVHML). The Cytoplasmic segment spans residues 212 to 240 (ARACQHAQGIIRLHNRQLPAHKGFGLRGA). A helical membrane pass occupies residues 241 to 266 (ATLTILLGIFFLCWGPFFLHLTLVVF). Topologically, residues 267 to 279 (CPQHLTCNCIFKN) are extracellular. The helical transmembrane segment at 280–300 (FKVFLTLIICNTIIDPLIYAF) threads the bilayer. At 301 to 344 (RSQELRRTLKEVLLCSSWPGCWAEGGGDSVWPGSCVTLRGPLPP) the chain is on the cytoplasmic side. Cys315 carries S-palmitoyl cysteine lipidation.

This sequence belongs to the G-protein coupled receptor 1 family. In terms of assembly, interacts with MGRN1, but does not undergo MGRN1-mediated ubiquitination; this interaction competes with GNAS-binding and thus inhibits agonist-induced cAMP production. Interacts with OPN3; the interaction results in a decrease in MC1R-mediated cAMP signaling and ultimately a decrease in melanin production in melanocytes.

It localises to the cell membrane. Its function is as follows. Receptor for MSH (alpha, beta and gamma) and ACTH. The activity of this receptor is mediated by G proteins which activate adenylate cyclase. Mediates melanogenesis, the production of eumelanin (black/brown) and phaeomelanin (red/yellow), via regulation of cAMP signaling in melanocytes. The protein is Melanocyte-stimulating hormone receptor (MC1R) of Callithrix jacchus (White-tufted-ear marmoset).